Reading from the N-terminus, the 244-residue chain is 7-cyano-7-deazaguanine synthase (244 aa).

F14–V24 lines the ATP pocket. Zn(2+) contacts are provided by C202, C217, C220, and C223.

It belongs to the QueC family. The cofactor is Zn(2+).

It carries out the reaction 7-carboxy-7-deazaguanine + NH4(+) + ATP = 7-cyano-7-deazaguanine + ADP + phosphate + H2O + H(+). It participates in purine metabolism; 7-cyano-7-deazaguanine biosynthesis. Functionally, catalyzes the ATP-dependent conversion of 7-carboxy-7-deazaguanine (CDG) to 7-cyano-7-deazaguanine (preQ(0)). This Burkholderia cenocepacia (strain ATCC BAA-245 / DSM 16553 / LMG 16656 / NCTC 13227 / J2315 / CF5610) (Burkholderia cepacia (strain J2315)) protein is 7-cyano-7-deazaguanine synthase.